Reading from the N-terminus, the 201-residue chain is Small ribosomal subunit protein eS1 (201 aa).

The protein belongs to the eukaryotic ribosomal protein eS1 family.

This is Small ribosomal subunit protein eS1 from Methanoregula boonei (strain DSM 21154 / JCM 14090 / 6A8).